We begin with the raw amino-acid sequence, 436 residues long: Adenylosuccinate synthetase (436 aa).

Residues 12 to 18 (GDEGKGK) and 40 to 42 (GHT) each bind GTP. The active-site Proton acceptor is Asp-13. Mg(2+) contacts are provided by Asp-13 and Gly-40. Residues 13–16 (DEGK), 38–41 (NAGH), Thr-128, Arg-142, Gln-223, Thr-238, and Arg-302 each bind IMP. His-41 functions as the Proton donor in the catalytic mechanism. 298 to 304 (TTTGRRR) serves as a coordination point for substrate. Residues Arg-304, 330–332 (KLD), and 412–414 (SLG) contribute to the GTP site.

Belongs to the adenylosuccinate synthetase family. Homodimer. It depends on Mg(2+) as a cofactor.

Its subcellular location is the cytoplasm. It carries out the reaction IMP + L-aspartate + GTP = N(6)-(1,2-dicarboxyethyl)-AMP + GDP + phosphate + 2 H(+). It functions in the pathway purine metabolism; AMP biosynthesis via de novo pathway; AMP from IMP: step 1/2. In terms of biological role, plays an important role in the de novo pathway of purine nucleotide biosynthesis. Catalyzes the first committed step in the biosynthesis of AMP from IMP. In Prochlorococcus marinus subsp. pastoris (strain CCMP1986 / NIES-2087 / MED4), this protein is Adenylosuccinate synthetase.